We begin with the raw amino-acid sequence, 367 residues long: MPPRKKEYGIKRASGSLVHFRAPVSATTIRRHSAVVPSVLTFAVIVASGGLLLMIEKGMLNSVQTPPPRANGRKVEYRLRSSSDTAADVESQIVQEIRNRTIRSVCGQRNMPHSVWSLSPLQRKTLLQHILVNDEHRFLYCYVPKVACSNWKRVLKVLSGALANVDIKVKMDHRADLVFLSDLPPEEIRHRLRHYFKFMFVREPMARLLSAYRNKFGEIEAYQRKYGAEIIRRYRKGYAKDKKISGNDVTFTEFTRYLVDEDPERMNEHWMPIYNLCQPCAIEYDFIGSYERLESDASYILERVGAPQHVRFPERQTWYKPVTKETLHYYLCTVPQKFLKELLPKYILDFSLFGYPLPNTTTEYCRH.

Residues 1–34 (MPPRKKEYGIKRASGSLVHFRAPVSATTIRRHSA) are Cytoplasmic-facing. The chain crosses the membrane as a helical; Signal-anchor for type II membrane protein span at residues 35–55 (VVPSVLTFAVIVASGGLLLMI). Residues 56-367 (EKGMLNSVQT…PNTTTEYCRH (312 aa)) are Lumenal-facing. Residue asparagine 99 is glycosylated (N-linked (GlcNAc...) asparagine). 3'-phosphoadenylyl sulfate-binding positions include 144 to 150 (PKVACSN) and 202 to 210 (REPMARLLS). Residue asparagine 359 is glycosylated (N-linked (GlcNAc...) asparagine).

This sequence belongs to the sulfotransferase 2 family.

It localises to the golgi apparatus membrane. Functionally, catalyzes the transfer of sulfate to position 4 of the N-acetylgalactosamine (GalNAc) residue of dermatan sulfate. The chain is Carbohydrate sulfotransferase 14 (chst14) from Danio rerio (Zebrafish).